The primary structure comprises 101 residues: Parathymosin (101 aa).

Residues 1-101 (MSEKSVEAAA…RQKTENGASA (101 aa)) form a disordered region. Ser2 bears the N-acetylserine mark. Ser2 carries the post-translational modification Phosphoserine. Position 4 is an N6-acetyllysine (Lys4). 2 positions are modified to phosphoserine: Ser5 and Ser13. Over residues 13–37 (SAKDLKEKKDKVEEKAGRKERKKEV) the composition is skewed to basic and acidic residues. Lys15 bears the N6-acetyllysine mark. The segment covering 38–74 (VEEEENGAEEEEEETAEDGEDDDEGDEEDEEEEEEDE) has biased composition (acidic residues). At Thr52 the chain carries Phosphothreonine. At Lys91 the chain carries N6-acetyllysine.

The protein belongs to the pro/parathymosin family.

Its function is as follows. Parathymosin may mediate immune function by blocking the effect of prothymosin alpha which confers resistance to certain opportunistic infections. The sequence is that of Parathymosin (Ptms) from Mus musculus (Mouse).